A 705-amino-acid chain; its full sequence is Translation factor GUF1 homolog, mitochondrial (705 aa).

The N-terminal 20 residues, 1–20 (MVCHRYLLGLGASTLCLRRL), are a transit peptide targeting the mitochondrion. The disordered stretch occupies residues 72–92 (PVEDNGTTNLTGTGEATSETG). Residues 76-90 (NGTTNLTGTGEATSE) are compositionally biased toward polar residues. One can recognise a tr-type G domain in the interval 105 to 288 (NRMRNFCIIA…AVVERIPPPK (184 aa)). GTP is bound by residues 114–121 (AHVDHGKS), 181–185 (DTPGH), and 235–238 (NKID).

This sequence belongs to the TRAFAC class translation factor GTPase superfamily. Classic translation factor GTPase family. LepA subfamily.

It localises to the mitochondrion inner membrane. It carries out the reaction GTP + H2O = GDP + phosphate + H(+). Its function is as follows. Promotes mitochondrial protein synthesis. May act as a fidelity factor of the translation reaction, by catalyzing a one-codon backward translocation of tRNAs on improperly translocated ribosomes. Binds to mitochondrial ribosomes in a GTP-dependent manner. The protein is Translation factor GUF1 homolog, mitochondrial of Babesia bovis.